The primary structure comprises 244 residues: Type III pantothenate kinase (244 aa).

8 to 15 provides a ligand contact to ATP; that stretch reads DQGNSACK. Substrate-binding positions include Tyr-88 and 94 to 97; that span reads GADR. Catalysis depends on Asp-96, which acts as the Proton acceptor. Asp-117 is a K(+) binding site. Thr-120 is a binding site for ATP. Thr-175 contacts substrate.

It belongs to the type III pantothenate kinase family. As to quaternary structure, homodimer. Requires NH4(+) as cofactor. The cofactor is K(+).

It is found in the cytoplasm. It carries out the reaction (R)-pantothenate + ATP = (R)-4'-phosphopantothenate + ADP + H(+). The protein operates within cofactor biosynthesis; coenzyme A biosynthesis; CoA from (R)-pantothenate: step 1/5. Catalyzes the phosphorylation of pantothenate (Pan), the first step in CoA biosynthesis. In Porphyromonas gingivalis (strain ATCC BAA-308 / W83), this protein is Type III pantothenate kinase.